We begin with the raw amino-acid sequence, 317 residues long: Carbonic anhydrase 5B, mitochondrial (317 aa).

Residues 1 to 33 (MAVMNHLRVILQVSSSTLPWRRCWVPRLVPRRS) constitute a mitochondrion transit peptide. The 260-residue stretch at 37–296 (YTCTYRTRNR…LMNRTVRSSF (260 aa)) folds into the Alpha-carbonic anhydrase domain. Zn(2+) is bound by residues H130, H132, and H155. 235–236 (TT) serves as a coordination point for substrate.

The protein belongs to the alpha-carbonic anhydrase family. The cofactor is Zn(2+). Expressed in the heart, liver, lung, kidney, testis, and skeletal muscle (at protein level).

It is found in the mitochondrion. The catalysed reaction is hydrogencarbonate + H(+) = CO2 + H2O. In terms of biological role, mitochondrial carbonic anhydrase that catalyzes the reversible conversion of carbon dioxide to bicarbonate/HCO3. The sequence is that of Carbonic anhydrase 5B, mitochondrial (Ca5b) from Mus musculus (Mouse).